The following is a 340-amino-acid chain: Glyceraldehyde-3-phosphate dehydrogenase (340 aa).

Residues 11–12 (SI) and G111 contribute to the NAD(+) site. D-glyceraldehyde 3-phosphate is bound at residue 140-142 (SCN). C141 functions as the Nucleophile in the catalytic mechanism. An NAD(+)-binding site is contributed by R169. 195–196 (HG) contributes to the D-glyceraldehyde 3-phosphate binding site. An NAD(+)-binding site is contributed by Q303.

This sequence belongs to the glyceraldehyde-3-phosphate dehydrogenase family. In terms of assembly, homotetramer.

The protein resides in the cytoplasm. It carries out the reaction D-glyceraldehyde 3-phosphate + phosphate + NADP(+) = (2R)-3-phospho-glyceroyl phosphate + NADPH + H(+). The enzyme catalyses D-glyceraldehyde 3-phosphate + phosphate + NAD(+) = (2R)-3-phospho-glyceroyl phosphate + NADH + H(+). It participates in carbohydrate degradation; glycolysis; pyruvate from D-glyceraldehyde 3-phosphate: step 1/5. In Methanococcus maripaludis (strain C7 / ATCC BAA-1331), this protein is Glyceraldehyde-3-phosphate dehydrogenase.